A 389-amino-acid chain; its full sequence is MTNKTITLNLGPQHPATHGVLRLILEMDGEVVNNADPHIGLLHRGTEKLIEHKTYLQAIPYFDRLDYVSPMCQEHAFALAVESLLECSVPRRAQFIRVLFSELTRILNHTLNIGSQALDIGATTPLLWLFEEREKIMEFYERVSGSRMHSNYFRPGGVAEDLPENLLEDINKFIEQFPSKLNDIENLLNENRLWKQRLVDIGVVSQKDAMDWGFSGPMLRGSGIAWDLRKSNPYDVYDEMDFEVPIGKNGDCYDRYLVRILEMYESIKIIKQCIVKMPKGQVKTDDPKLTPPTRGKMKESMEAMIHHFKLYTEGYDVPIGETYKAVEAPKGEFGVYLYSQGGNKPYRCRIKAPGFAHLQGLNFMSKGHLIADVITIIATLDIVFGEIDR.

This sequence belongs to the complex I 49 kDa subunit family. NDH-1 is composed of 14 different subunits. Subunits NuoB, C, D, E, F, and G constitute the peripheral sector of the complex.

Its subcellular location is the cell inner membrane. The catalysed reaction is a quinone + NADH + 5 H(+)(in) = a quinol + NAD(+) + 4 H(+)(out). Functionally, NDH-1 shuttles electrons from NADH, via FMN and iron-sulfur (Fe-S) centers, to quinones in the respiratory chain. The immediate electron acceptor for the enzyme in this species is believed to be ubiquinone. Couples the redox reaction to proton translocation (for every two electrons transferred, four hydrogen ions are translocated across the cytoplasmic membrane), and thus conserves the redox energy in a proton gradient. This Rickettsia prowazekii (strain Madrid E) protein is NADH-quinone oxidoreductase subunit D.